A 550-amino-acid chain; its full sequence is MKFLKRGVALALLAAFALTTQPAQAYEKDKTYKITILHTNDHHGHFWRSEYGEYGLAAQKTLVDSIRKEVAQEGGGVLLLSGGDINTGVPESDLQDAEPDFRGMNLIGYDAMAVGNHEFDNPLTVLRQQEKWAKFPFLSANIYQKSTGERLFKPWAIFTRQDIKIAVIGLTTDDTAKIGNPEYFTDIEFRKPAEEAKVVIQELNMNEKPDVIIATTHMGHYDNGDHGSNAPGDVEMARSLPAGSLAMIVGGHSQDPVCMASENKKQVNYVPGTPCAPDKQNGIWIVQAHEWGKYVGRADFEFRNGEMKMVNYQLIPVNLKKKVTWDNGKSERVLYTPEIAENPQMLLLLTPFQNKGKVQLEVKIGSVNGLLEGDRSKVRFVQTNMGRVILAAQIARTGADFGVMSGGGIRDSIEAGDITYKSVLKVQPFGNIVVYADMSGKEVVDYLTRVAQMKPDSGAYPQLANVSFVAKEGKLTDLKIKGEPVDPAKTYRMATLSFNATGGDGYPRIDNKPGYVNTGFIDAEVLKEFIQQNSPLDAAAFTPKGEVSWL.

An N-terminal signal peptide occupies residues 1–25 (MKFLKRGVALALLAAFALTTQPAQA). 7 residues coordinate Zn(2+): D41, H43, D84, N116, H217, H252, and Q254. C258 and C275 are joined by a disulfide. Residues F429 and 498–504 (FNATGGD) each bind substrate.

The protein belongs to the 5'-nucleotidase family. Monomer. Zn(2+) is required as a cofactor.

It localises to the periplasm. It catalyses the reaction UDP-sugar + H2O = UMP + alpha-D-aldose 1-phosphate.. It carries out the reaction a ribonucleoside 5'-phosphate + H2O = a ribonucleoside + phosphate. Functionally, degradation of external UDP-glucose to uridine monophosphate and glucose-1-phosphate, which can then be used by the cell. This chain is Protein UshA (ushA), found in Salmonella pullorum.